Consider the following 264-residue polypeptide: 1H-3-hydroxy-4-oxoquinoline 2,4-dioxygenase (264 aa).

Residues 30–32, 94–95, and tryptophan 153 each bind substrate; these read WCQ and TS. Histidine 244 serves as the catalytic Proton donor/acceptor.

It belongs to the AB hydrolase superfamily. None. Contrary to most other dioxygenases, this enzyme does not require a cofactor for catalysis. serves as cofactor.

It catalyses the reaction 3-hydroxy-1H-quinolin-4-one + O2 = N-formylanthranilate + CO + H(+). Functionally, ring-cleaving dioxygenase involved in oxoquinoline degradation and utilization. In Pseudomonas putida (Arthrobacter siderocapsulatus), this protein is 1H-3-hydroxy-4-oxoquinoline 2,4-dioxygenase (qdo).